The sequence spans 124 residues: Conotoxin Cl14.12 (124 aa).

An N-terminal signal peptide occupies residues 1 to 17; it reads MKVAVVLLVSLLAVTYA. A propeptide spanning residues 18-74 is cleaved from the precursor; that stretch reads LPEKRIFFGGIVDKVKDTFTKIFNKAKETFDKITDGFDVDFDEVVDKLIAQIHSTPT.

Contains 2 disulfide bond. Expressed by the venom duct.

The protein localises to the secreted. The sequence is that of Conotoxin Cl14.12 from Californiconus californicus (California cone).